We begin with the raw amino-acid sequence, 387 residues long: G2/mitotic-specific cyclin-B2 (387 aa).

The protein belongs to the cyclin family. Cyclin AB subfamily. Interacts with the CDK1 protein kinase to form a serine/threonine kinase holoenzyme complex also known as maturation promoting factor (MPF). The cyclin subunit imparts substrate specificity to the complex.

Its function is as follows. Essential for the control of the cell cycle at the G2/M (mitosis) transition. This is G2/mitotic-specific cyclin-B2 (ccnb2) from Oryzias latipes (Japanese rice fish).